Reading from the N-terminus, the 373-residue chain is Polygalacturonase (373 aa).

The signal sequence occupies residues M1 to R24. An intrachain disulfide couples C27 to C42. N-linked (GlcNAc...) asparagine glycosylation is found at N65 and N94. PbH1 repeat units lie at residues T136–G158, S159–S197, S198–S219, G220–S240, V249–S270, I278–Q300, T312–A333, and C345–N369. Catalysis depends on D212, which acts as the Proton donor. Cysteines 214 and 230 form a disulfide. H234 is a catalytic residue. N280 and N290 each carry an N-linked (GlcNAc...) asparagine glycan. 2 disulfides stabilise this stretch: C340–C345 and C364–C371.

Belongs to the glycosyl hydrolase 28 family.

Its subcellular location is the secreted. The enzyme catalyses (1,4-alpha-D-galacturonosyl)n+m + H2O = (1,4-alpha-D-galacturonosyl)n + (1,4-alpha-D-galacturonosyl)m.. Its function is as follows. Involved in maceration and soft-rotting of plant tissue. Hydrolyzes the 1,4-alpha glycosidic bonds of de-esterified pectate in the smooth region of the plant cell wall. The sequence is that of Polygalacturonase (PGA) from Fusarium fujikuroi (Bakanae and foot rot disease fungus).